Consider the following 845-residue polypeptide: DNA replication licensing factor MCM7 (845 aa).

The 208-residue stretch at 410-617 (VYNRLAKSIA…DDEKLAEHVT (208 aa)) folds into the MCM domain. Residues Tyr-423, Gly-463, Ala-465, Lys-466, Ser-467, Asn-568, Arg-593, and Arg-687 each contribute to the ATP site. The Arginine finger signature appears at 592–595 (SRFD). Residue Thr-811 is modified to Phosphothreonine. The disordered stretch occupies residues 812–845 (DQEDSLVSTPKLAPQTTASANVSAQDSDIDLQDA). Ser-819 is modified (phosphoserine). Positions 825 to 837 (PQTTASANVSAQD) are enriched in polar residues. Ser-838 is modified (phosphoserine).

The protein belongs to the MCM family. Component of the MCM2-7 complex. The complex forms a toroidal hexameric ring with the proposed subunit order MCM2-MCM6-MCM4-MCM7-MCM3-MCM5; loaded onto DNA, forms a head-head double hexamer. Interacts with CSM1 and MCM10.

The protein localises to the cytoplasm. Its subcellular location is the nucleus. It carries out the reaction ATP + H2O = ADP + phosphate + H(+). Its function is as follows. Acts as a component of the MCM2-7 complex (MCM complex) which is the putative replicative helicase essential for 'once per cell cycle' DNA replication initiation and elongation in eukaryotic cells. Core component of CDC45-MCM-GINS (CMG) helicase, the molecular machine that unwinds template DNA during replication, and around which the replisome is built. The active ATPase sites in the MCM2-7 ring are formed through the interaction surfaces of two neighboring subunits such that a critical structure of a conserved arginine finger motif is provided in trans relative to the ATP-binding site of the Walker A box of the adjacent subunit. The six ATPase active sites, however, are likely to contribute differentially to the complex helicase activity. Once loaded onto DNA, double hexamers can slide on dsDNA in the absence of ATPase activity. This is DNA replication licensing factor MCM7 (MCM7) from Saccharomyces cerevisiae (strain ATCC 204508 / S288c) (Baker's yeast).